The primary structure comprises 459 residues: Spermatogenesis-associated protein 1 (459 aa).

Basic and acidic residues predominate over residues 193–205 (LKELPNKNQEEAG). The tract at residues 193–213 (LKELPNKNQEEAGGKATAEKS) is disordered. Coiled-coil stretches lie at residues 287-374 (TDIS…YKKL) and 400-453 (LIIQ…KKII).

As to quaternary structure, interacts with IFT20.

It is found in the cytoplasmic vesicle. The protein resides in the secretory vesicle. It localises to the acrosome. This Homo sapiens (Human) protein is Spermatogenesis-associated protein 1 (SPATA1).